Here is a 313-residue protein sequence, read N- to C-terminus: Curved DNA-binding protein (313 aa).

The region spanning 5-69 is the J domain; the sequence is DYYKILGVSR…EKRKAYDAIG (65 aa). Residues 71–93 form a disordered region; the sequence is GWKQGQGFTPPPGWESRPGGEGV.

It is found in the cytoplasm. Its subcellular location is the nucleoid. Functionally, DNA-binding protein that preferentially recognizes a curved DNA sequence. It is probably a functional analog of DnaJ; displays overlapping activities with DnaJ, but functions under different conditions, probably acting as a molecular chaperone in an adaptive response to environmental stresses other than heat shock. Lacks autonomous chaperone activity; binds native substrates and targets them for recognition by DnaK. Its activity is inhibited by the binding of CbpM. This Coxiella burnetii (strain Dugway 5J108-111) protein is Curved DNA-binding protein.